Reading from the N-terminus, the 681-residue chain is DNA ligase (681 aa).

NAD(+)-binding positions include 42-46 (DAEYD), 91-92 (SL), and Glu120. Lys122 serves as the catalytic N6-AMP-lysine intermediate. Residues Arg143, Glu180, Lys302, and Lys326 each coordinate NAD(+). Zn(2+) is bound by residues Cys420, Cys423, Cys438, and Cys444. A BRCT domain is found at 603-681 (ADAQPLLGQT…EAGLIELIGL (79 aa)).

This sequence belongs to the NAD-dependent DNA ligase family. LigA subfamily. Mg(2+) serves as cofactor. It depends on Mn(2+) as a cofactor.

It catalyses the reaction NAD(+) + (deoxyribonucleotide)n-3'-hydroxyl + 5'-phospho-(deoxyribonucleotide)m = (deoxyribonucleotide)n+m + AMP + beta-nicotinamide D-nucleotide.. Functionally, DNA ligase that catalyzes the formation of phosphodiester linkages between 5'-phosphoryl and 3'-hydroxyl groups in double-stranded DNA using NAD as a coenzyme and as the energy source for the reaction. It is essential for DNA replication and repair of damaged DNA. This is DNA ligase from Shewanella amazonensis (strain ATCC BAA-1098 / SB2B).